The chain runs to 536 residues: ATP synthase subunit beta (536 aa).

The interval 1–57 is disordered; that stretch reads MVKAVSSSKGAAKVEQKKSAARSGVKKNASKSQASLQDTSSPLKTSSKNAHAKKDVQ. Positions 30–49 are enriched in polar residues; it reads SKSQASLQDTSSPLKTSSKN. Residue 208–215 coordinates ATP; sequence GGAGVGKT.

This sequence belongs to the ATPase alpha/beta chains family. As to quaternary structure, F-type ATPases have 2 components, CF(1) - the catalytic core - and CF(0) - the membrane proton channel. CF(1) has five subunits: alpha(3), beta(3), gamma(1), delta(1), epsilon(1). CF(0) has three main subunits: a(1), b(2) and c(9-12). The alpha and beta chains form an alternating ring which encloses part of the gamma chain. CF(1) is attached to CF(0) by a central stalk formed by the gamma and epsilon chains, while a peripheral stalk is formed by the delta and b chains.

The protein localises to the cell inner membrane. The catalysed reaction is ATP + H2O + 4 H(+)(in) = ADP + phosphate + 5 H(+)(out). In terms of biological role, produces ATP from ADP in the presence of a proton gradient across the membrane. The catalytic sites are hosted primarily by the beta subunits. The sequence is that of ATP synthase subunit beta from Bartonella quintana (strain Toulouse) (Rochalimaea quintana).